Reading from the N-terminus, the 351-residue chain is Caveolin-2 (351 aa).

The segment covering 1–14 (MTRQNTSESDNTQR) has biased composition (polar residues). Disordered stretches follow at residues 1–55 (MTRQ…QGIA), 71–93 (HRTSLNQEVPTPQRRSHPQYDNL), and 144–193 (QKGS…PEME). Topologically, residues 1–261 (MTRQNTSESD…FEIVRIYSYK (261 aa)) are cytoplasmic. Residues 22–31 (TVDDIDELTD) show a composition bias toward acidic residues. Positions 38–51 (HHHHHHHHEHHHQH) are enriched in basic residues. Low complexity predominate over residues 167 to 184 (PAQQSAPPTQQSRPQTTS). Positions 262 to 290 (ILTLIFGLIIAFLGGILFALFAFLNIWIF) form an intramembrane region, helical. Residues 291–351 (RPILILTRMA…EVWEKHIHHV (61 aa)) are Cytoplasmic-facing.

The protein belongs to the caveolin family. Homooligomer. Expressed in intracellular bodies in intestinal cells.

It localises to the golgi apparatus membrane. The protein localises to the cell membrane. It is found in the membrane. Its subcellular location is the caveola. The protein resides in the apical cell membrane. Functionally, may act as a scaffolding protein within caveolar membranes. Interacts directly with G-protein alpha subunits and can regulate their activity. Thought to have a role in the uptake of lipids and proteins in the intestinal cells; operates in the apical uptake of lipid markers and trafficking of yolk proteins. Affects fecundity and egg laying. This Caenorhabditis elegans protein is Caveolin-2 (cav-2).